A 207-amino-acid polypeptide reads, in one-letter code: Ribosomal RNA small subunit methyltransferase G (207 aa).

S-adenosyl-L-methionine-binding positions include G71, F76, 122 to 123 (AE), and R135.

It belongs to the methyltransferase superfamily. RNA methyltransferase RsmG family.

Its subcellular location is the cytoplasm. Specifically methylates the N7 position of a guanine in 16S rRNA. This is Ribosomal RNA small subunit methyltransferase G from Cytophaga hutchinsonii (strain ATCC 33406 / DSM 1761 / CIP 103989 / NBRC 15051 / NCIMB 9469 / D465).